Here is a 522-residue protein sequence, read N- to C-terminus: Maturase K (522 aa).

This sequence belongs to the intron maturase 2 family. MatK subfamily.

The protein resides in the plastid. The protein localises to the chloroplast. Its function is as follows. Usually encoded in the trnK tRNA gene intron. Probably assists in splicing its own and other chloroplast group II introns. The polypeptide is Maturase K (Iris domestica (Leopard lily)).